The chain runs to 162 residues: Urease subunit beta (162 aa).

The disordered stretch occupies residues 116–162; it reads WRRSSAAGDAPQELPQVEAAERGRKLDDATDVDTNVGTEEGFEEGRN. A compositionally biased stretch (basic and acidic residues) spans 134-143; sequence AAERGRKLDD.

The protein belongs to the urease beta subunit family. Heterotrimer of UreA (gamma), UreB (beta) and UreC (alpha) subunits. Three heterotrimers associate to form the active enzyme.

Its subcellular location is the cytoplasm. The catalysed reaction is urea + 2 H2O + H(+) = hydrogencarbonate + 2 NH4(+). The protein operates within nitrogen metabolism; urea degradation; CO(2) and NH(3) from urea (urease route): step 1/1. This Corynebacterium glutamicum (strain ATCC 13032 / DSM 20300 / JCM 1318 / BCRC 11384 / CCUG 27702 / LMG 3730 / NBRC 12168 / NCIMB 10025 / NRRL B-2784 / 534) protein is Urease subunit beta.